A 537-amino-acid polypeptide reads, in one-letter code: Glucose-6-phosphate isomerase (537 aa).

The active-site Proton donor is E355. Residues H386 and K501 contribute to the active site.

The protein belongs to the GPI family.

It is found in the cytoplasm. The catalysed reaction is alpha-D-glucose 6-phosphate = beta-D-fructose 6-phosphate. It functions in the pathway carbohydrate biosynthesis; gluconeogenesis. The protein operates within carbohydrate degradation; glycolysis; D-glyceraldehyde 3-phosphate and glycerone phosphate from D-glucose: step 2/4. Functionally, catalyzes the reversible isomerization of glucose-6-phosphate to fructose-6-phosphate. This is Glucose-6-phosphate isomerase from Protochlamydia amoebophila (strain UWE25).